Reading from the N-terminus, the 208-residue chain is Adapter protein MecA (208 aa).

It belongs to the MecA family. In terms of assembly, homodimer.

Its function is as follows. Enables the recognition and targeting of unfolded and aggregated proteins to the ClpC protease or to other proteins involved in proteolysis. The chain is Adapter protein MecA from Exiguobacterium sibiricum (strain DSM 17290 / CCUG 55495 / CIP 109462 / JCM 13490 / 255-15).